The sequence spans 78 residues: Defensin-like protein 308 (78 aa).

A signal peptide spans 1–19 (MKTSAFFIAVLLILSCSSS). Disulfide bonds link Cys31-Cys50, Cys37-Cys55, and Cys41-Cys57.

The protein belongs to the DEFL family.

The protein resides in the secreted. In Arabidopsis thaliana (Mouse-ear cress), this protein is Defensin-like protein 308.